The sequence spans 368 residues: Spore germination protein B2 (368 aa).

10 helical membrane-spanning segments follow: residues 10 to 30 (FMQT…LTLP), 43 to 63 (LMIL…LPFL), 82 to 102 (FIGF…VCFQ), 120 to 140 (MAVV…GGVY), 145 to 165 (VYAY…MFSF), 187 to 207 (LFPK…LVPF), 217 to 237 (AVAL…LIVI), 282 to 302 (FACM…IFHL), 308 to 328 (AWLL…PKDL), and 338 to 358 (LGYA…LSWI).

This sequence belongs to the amino acid-polyamine-organocation (APC) superfamily. Spore germination protein (SGP) (TC 2.A.3.9) family.

The protein localises to the cell membrane. Its function is as follows. Involved in the response to the germinative mixture of L-asparagine, glucose, fructose and potassium ions (AGFK). Could be an amino acid transporter. Cannot stimulate germination in the absence of gerD and gerK gene products (fructose and glucose receptors, respectively). In Bacillus subtilis (strain 168), this protein is Spore germination protein B2 (gerBB).